Here is a 99-residue protein sequence, read N- to C-terminus: Large ribosomal subunit protein uL23 (99 aa).

This sequence belongs to the universal ribosomal protein uL23 family. In terms of assembly, part of the 50S ribosomal subunit. Contacts protein L29, and trigger factor when it is bound to the ribosome.

Functionally, one of the early assembly proteins it binds 23S rRNA. One of the proteins that surrounds the polypeptide exit tunnel on the outside of the ribosome. Forms the main docking site for trigger factor binding to the ribosome. The sequence is that of Large ribosomal subunit protein uL23 from Hydrogenobaculum sp. (strain Y04AAS1).